The chain runs to 162 residues: Troponin C, skeletal muscle (162 aa).

4 consecutive EF-hand domains span residues 17 to 52 (EMIAEFKAAFDMFDADGGGDISTKELGTVMRMLGQN), 53 to 88 (PTKEELDAIIEEVDEDGSGTIDFEEFLVMMVRQMKE), 93 to 128 (KSEEELANCFRIFDKNADGFIDIEELGEILRATGEH), and 129 to 162 (VTEEEIEDLMKDSDKNNDGRIDFDEFLKMMEGVQ). Ca(2+) is bound by residues Asp-30, Asp-32, Asp-36, Glu-41, Asp-66, Asp-68, Ser-70, Thr-72, Glu-77, Asp-106, Asn-108, Asp-110, Glu-117, Asp-142, Asn-144, Asp-146, Arg-148, and Glu-153.

The protein belongs to the troponin C family.

In terms of biological role, troponin is the central regulatory protein of striated muscle contraction. Tn consists of three components: Tn-I which is the inhibitor of actomyosin ATPase, Tn-T which contains the binding site for tropomyosin and Tn-C. The binding of calcium to Tn-C abolishes the inhibitory action of Tn on actin filaments. The protein is Troponin C, skeletal muscle (TNNC2) of Meleagris gallopavo (Wild turkey).